A 57-amino-acid polypeptide reads, in one-letter code: UPF0391 membrane protein bsl5717 (57 aa).

Helical transmembrane passes span 6–26 (WALI…TGIS) and 35–55 (FLFY…LTIF).

The protein belongs to the UPF0391 family.

The protein resides in the cell membrane. This is UPF0391 membrane protein bsl5717 from Bradyrhizobium diazoefficiens (strain JCM 10833 / BCRC 13528 / IAM 13628 / NBRC 14792 / USDA 110).